The primary structure comprises 278 residues: MPELPEVETVRRGLADRLSLFEIERVEVCRSRAIASSGGVAAFLVGLTGARVGTWSRRGKYLMAALEPNRGIWGVHLRMTGQFQWIEEPSTPCTHTRVRFWNANGHELRFVDVRSFGEMWWVPPDVELTVGIPGLARLGPEPFSEAFSAPYLKRQLKNSSRPIKTALLDQALVAGVGNIYADESLFSAGIPPLTPAGRLTLAQLERLRSSLVEVLTTSIGAGGTTFSDFRDLEGVNGNYGGQAWVYRRGGEPCRRCGTIIRRDKLSGRSTHWCPTCQG.

Proline 2 (schiff-base intermediate with DNA) is an active-site residue. The active-site Proton donor is the glutamate 3. The Proton donor; for beta-elimination activity role is filled by lysine 60. Residues histidine 95 and arginine 114 each contribute to the DNA site. The segment at 244 to 278 adopts an FPG-type zinc-finger fold; the sequence is WVYRRGGEPCRRCGTIIRRDKLSGRSTHWCPTCQG. The active-site Proton donor; for delta-elimination activity is arginine 268.

It belongs to the FPG family. Monomer. Requires Zn(2+) as cofactor.

The catalysed reaction is Hydrolysis of DNA containing ring-opened 7-methylguanine residues, releasing 2,6-diamino-4-hydroxy-5-(N-methyl)formamidopyrimidine.. It carries out the reaction 2'-deoxyribonucleotide-(2'-deoxyribose 5'-phosphate)-2'-deoxyribonucleotide-DNA = a 3'-end 2'-deoxyribonucleotide-(2,3-dehydro-2,3-deoxyribose 5'-phosphate)-DNA + a 5'-end 5'-phospho-2'-deoxyribonucleoside-DNA + H(+). In terms of biological role, involved in base excision repair of DNA damaged by oxidation or by mutagenic agents. Acts as a DNA glycosylase that recognizes and removes damaged bases. Has a preference for oxidized purines, such as 7,8-dihydro-8-oxoguanine (8-oxoG). Has AP (apurinic/apyrimidinic) lyase activity and introduces nicks in the DNA strand. Cleaves the DNA backbone by beta-delta elimination to generate a single-strand break at the site of the removed base with both 3'- and 5'-phosphates. This Parasynechococcus marenigrum (strain WH8102) protein is Formamidopyrimidine-DNA glycosylase.